Here is a 264-residue protein sequence, read N- to C-terminus: 3-methyl-2-oxobutanoate hydroxymethyltransferase (264 aa).

Mg(2+) contacts are provided by D45 and D84. Residues 45-46 (DS), D84, and K112 each bind 3-methyl-2-oxobutanoate. E114 lines the Mg(2+) pocket. The active-site Proton acceptor is the E181.

This sequence belongs to the PanB family. Homodecamer; pentamer of dimers. The cofactor is Mg(2+).

The protein resides in the cytoplasm. It catalyses the reaction 3-methyl-2-oxobutanoate + (6R)-5,10-methylene-5,6,7,8-tetrahydrofolate + H2O = 2-dehydropantoate + (6S)-5,6,7,8-tetrahydrofolate. It participates in cofactor biosynthesis; (R)-pantothenate biosynthesis; (R)-pantoate from 3-methyl-2-oxobutanoate: step 1/2. In terms of biological role, catalyzes the reversible reaction in which hydroxymethyl group from 5,10-methylenetetrahydrofolate is transferred onto alpha-ketoisovalerate to form ketopantoate. This Shewanella sp. (strain MR-7) protein is 3-methyl-2-oxobutanoate hydroxymethyltransferase.